Reading from the N-terminus, the 196-residue chain is Elongation factor Ts (196 aa).

The segment at 80 to 83 (TDFV) is involved in Mg(2+) ion dislocation from EF-Tu.

Belongs to the EF-Ts family.

Its subcellular location is the cytoplasm. Its function is as follows. Associates with the EF-Tu.GDP complex and induces the exchange of GDP to GTP. It remains bound to the aminoacyl-tRNA.EF-Tu.GTP complex up to the GTP hydrolysis stage on the ribosome. This chain is Elongation factor Ts, found in Thermus thermophilus (strain ATCC BAA-163 / DSM 7039 / HB27).